The primary structure comprises 262 residues: Chondroitin proteoglycan 3 (262 aa).

Residues 1–17 (MRSSFIFALLLIGAALA) form the signal peptide. Residues 37–68 (FSGEASGEASGEASGEFSGEGSGEGSGELSPE) are disordered. A compositionally biased stretch (low complexity) spans 39 to 53 (GEASGEASGEASGEF). N-linked (GlcNAc...) asparagine glycans are attached at residues Asn-140, Asn-148, and Asn-224.

This is Chondroitin proteoglycan 3 (cpg-3) from Caenorhabditis briggsae.